Consider the following 399-residue polypeptide: MNYDVILIRYGELALKGKNRDQFEEALVKSVRNVLRSFFKVKVRRNYGRMYVELHGEDAYAVMERLKRVFGISSFSPTIQVDPDIETIKEKALELVRQLNPQPRTFRVVSRRADKRYPIQSMEVNRMVATHILRALPAISVDLHEPDTIVNVEIRTEGTYISCETIKGLGGLPVGVSGKVLLLLSGGIDSPVAGWMMLKRGVTLEAIHFHSYPFTSERALQKVRDLAHKLTKWGGTVRLHVVPFTEIQTAIREKCPEDYLITIMRRFMMRISERVAENTNAKALATGESLGQVASQTLESMDTINKVISIPILRPLVAMDKVDIVDISRQIDTYELSILPYEDCCTVFTPKNPVTRPKPRLAAKFEEVLDVEALVEDAVARTEIEEITTKPKETTTDLF.

One can recognise a THUMP domain in the interval 60 to 165 (YAVMERLKRV…TEGTYISCET (106 aa)). Residues 183-184 (LL), 208-209 (HF), R265, G287, and Q296 contribute to the ATP site.

Belongs to the ThiI family.

It is found in the cytoplasm. The enzyme catalyses [ThiI sulfur-carrier protein]-S-sulfanyl-L-cysteine + a uridine in tRNA + 2 reduced [2Fe-2S]-[ferredoxin] + ATP + H(+) = [ThiI sulfur-carrier protein]-L-cysteine + a 4-thiouridine in tRNA + 2 oxidized [2Fe-2S]-[ferredoxin] + AMP + diphosphate. The catalysed reaction is [ThiS sulfur-carrier protein]-C-terminal Gly-Gly-AMP + S-sulfanyl-L-cysteinyl-[cysteine desulfurase] + AH2 = [ThiS sulfur-carrier protein]-C-terminal-Gly-aminoethanethioate + L-cysteinyl-[cysteine desulfurase] + A + AMP + 2 H(+). It participates in cofactor biosynthesis; thiamine diphosphate biosynthesis. Functionally, catalyzes the ATP-dependent transfer of a sulfur to tRNA to produce 4-thiouridine in position 8 of tRNAs, which functions as a near-UV photosensor. Also catalyzes the transfer of sulfur to the sulfur carrier protein ThiS, forming ThiS-thiocarboxylate. This is a step in the synthesis of thiazole, in the thiamine biosynthesis pathway. The sulfur is donated as persulfide by IscS. The protein is Probable tRNA sulfurtransferase of Brevibacillus brevis (strain 47 / JCM 6285 / NBRC 100599).